The primary structure comprises 865 residues: Alanine--tRNA ligase (865 aa).

Residues His554, His558, Cys656, and His660 each contribute to the Zn(2+) site.

It belongs to the class-II aminoacyl-tRNA synthetase family. Zn(2+) serves as cofactor.

The protein localises to the cytoplasm. The catalysed reaction is tRNA(Ala) + L-alanine + ATP = L-alanyl-tRNA(Ala) + AMP + diphosphate. Catalyzes the attachment of alanine to tRNA(Ala) in a two-step reaction: alanine is first activated by ATP to form Ala-AMP and then transferred to the acceptor end of tRNA(Ala). Also edits incorrectly charged Ser-tRNA(Ala) and Gly-tRNA(Ala) via its editing domain. The polypeptide is Alanine--tRNA ligase (Francisella tularensis subsp. tularensis (strain FSC 198)).